We begin with the raw amino-acid sequence, 295 residues long: Universal stress protein Mb2028c (295 aa).

Residues Gly-13, 117–123 (GSSGRGA), 131–132 (SV), Gly-165, Asp-198, 262–268 (GSHGRGG), and 276–278 (SVS) each bind ATP.

The protein belongs to the universal stress protein A family.

The chain is Universal stress protein Mb2028c from Mycobacterium bovis (strain ATCC BAA-935 / AF2122/97).